The following is a 151-amino-acid chain: LVIETIENIATKLSISISFKTDVTQTLIDITEIDLNAQDKILIRNTNAVINIKSKVGLTPLHLATLQNNLSVSKGAYLNDGDANGMTPLHYAAMTGNLEMVDFLKWTPLHLAILFKQLVIELLAKTFFDLAIENGRLNIVAFAVEKYIAAR.

ANK repeat units follow at residues 21–37, 41–52, 56–80, 84–104, 105–116, 117–125, 126–146, and 147–151; these read TDVT…DLNA, ILIRNTNAVINI, VGLT…YLND, NGMT…VDFL, KWTPLHLAILFK, QLVIELLAK, TFFD…AVEK, and YIAAR.

The protein belongs to the cationic peptide 01 (latrotoxin) family. 02 (alpha-latroinsectotoxin) subfamily. As to quaternary structure, homotetramer in membranes. In terms of tissue distribution, expressed by the venom gland.

The protein localises to the secreted. It localises to the target cell membrane. Its function is as follows. Insecticidal presynaptic neurotoxin that induces massive neurotransmitter release at insect (but not vertebrate) neuromuscular junctions. Native toxin forms cation-permeable pores (with high permeability to calcium) in lipid membranes locust muscle membrane and artificial lipid bilayers. May bind to insect neurexin-1 homolog, insect adhesion G protein-coupled receptor L1 homolog, and insect receptor-type tyrosine-protein phosphatase S homolog, and induces neurotransmitter exocytosis both by forming tetrameric pores in membranes and signaling via G protein-coupled receptor. Oligomerization is a process independent of divalent cations. The toxin forms channels with 0.55-0.58 nm entrance diameter and a relatively small conductance in planar phospholipid membranes. The sequence is that of Alpha-latroinsectotoxin-Lh1a from Latrodectus hasselti (Redback spider).